We begin with the raw amino-acid sequence, 74 residues long: Small ribosomal subunit protein bS18 (74 aa).

The protein belongs to the bacterial ribosomal protein bS18 family. In terms of assembly, part of the 30S ribosomal subunit. Forms a tight heterodimer with protein bS6.

Binds as a heterodimer with protein bS6 to the central domain of the 16S rRNA, where it helps stabilize the platform of the 30S subunit. The polypeptide is Small ribosomal subunit protein bS18 (Coprothermobacter proteolyticus (strain ATCC 35245 / DSM 5265 / OCM 4 / BT)).